The primary structure comprises 459 residues: Ribulose bisphosphate carboxylase large chain (459 aa).

Lys-4 is modified (N6,N6,N6-trimethyllysine). Substrate-binding residues include Asn-113 and Thr-163. Lys-165 serves as the catalytic Proton acceptor. Lys-167 provides a ligand contact to substrate. Residues Lys-191, Asp-193, and Glu-194 each coordinate Mg(2+). An N6-carboxylysine modification is found at Lys-191. Residue His-284 is the Proton acceptor of the active site. The substrate site is built by Arg-285, His-317, and Ser-369.

This sequence belongs to the RuBisCO large chain family. Type I subfamily. In terms of assembly, heterohexadecamer of 8 large chains and 8 small chains; disulfide-linked. The disulfide link is formed within the large subunit homodimers. Requires Mg(2+) as cofactor. Post-translationally, the disulfide bond which can form in the large chain dimeric partners within the hexadecamer appears to be associated with oxidative stress and protein turnover.

It localises to the plastid. The protein localises to the chloroplast. It catalyses the reaction 2 (2R)-3-phosphoglycerate + 2 H(+) = D-ribulose 1,5-bisphosphate + CO2 + H2O. The catalysed reaction is D-ribulose 1,5-bisphosphate + O2 = 2-phosphoglycolate + (2R)-3-phosphoglycerate + 2 H(+). In terms of biological role, ruBisCO catalyzes two reactions: the carboxylation of D-ribulose 1,5-bisphosphate, the primary event in carbon dioxide fixation, as well as the oxidative fragmentation of the pentose substrate in the photorespiration process. Both reactions occur simultaneously and in competition at the same active site. In Geum quellyon (Chilean avens), this protein is Ribulose bisphosphate carboxylase large chain.